We begin with the raw amino-acid sequence, 274 residues long: 4-diphosphocytidyl-2-C-methyl-D-erythritol kinase (274 aa).

Lysine 7 is a catalytic residue. An ATP-binding site is contributed by 90-100; it reads PMGGGLGGGSS. Aspartate 132 is an active-site residue.

This sequence belongs to the GHMP kinase family. IspE subfamily.

The catalysed reaction is 4-CDP-2-C-methyl-D-erythritol + ATP = 4-CDP-2-C-methyl-D-erythritol 2-phosphate + ADP + H(+). The protein operates within isoprenoid biosynthesis; isopentenyl diphosphate biosynthesis via DXP pathway; isopentenyl diphosphate from 1-deoxy-D-xylulose 5-phosphate: step 3/6. Its function is as follows. Catalyzes the phosphorylation of the position 2 hydroxy group of 4-diphosphocytidyl-2C-methyl-D-erythritol. This chain is 4-diphosphocytidyl-2-C-methyl-D-erythritol kinase, found in Dechloromonas aromatica (strain RCB).